The following is a 776-amino-acid chain: MAAPGDPQDELLPLAGPGSQWLRDRGEGEDEAVTPKGATPAPQAGEPSPGLGARAREAASREAGSGPARQSPVAMETASTGVAGVSSAMDHTFSTTSKDGEGSCYTSLISDICYPPQEDSTYFTGILQRENGHVTISESPEELGTPGSSLPDVPGIESRGLFSSDSGIEMTPAESTEVNKILADPLDQMKAEAYKYIDITRPEEVKHQEQNHPELEDKDLDFKNKDTDISIKPEGVREPDEPAPVEGKIIKDHLLEESTFAPYIDDLSEEQRRAPQITTPVKITLTEIEPSVETTTQEKTPEKQDICLKPSPDTVPTVTVSEPEDDSPGSITPPSSGTEPSAAESQGKGSISEDELITAIKEAKGLSYETAESPRPVGQLADRPEVKARSGPPTIPSPLDHEASSAESGDSEIELVSEDPMAAEDALPSGYVSFGHVGGPPPSPASPSIQYSILREEREAELDSELIIESCDASSASEESPKREQDSPPMKPGALDAIREETGVRAEERAPSRRGLAEPASFLDYPSTEPQPGPELPPGDGALEPETPTLPRKPEEDASSHQSPAATKGPGPLGPGAPPPLLFLNKQKAIDLLYWRDIKQTGIVFGSFLLLLFSLTQFSVVSVVAYLALAALSATISFRIYKSVLQAVQKTDEGHPFKAYLELEITLSQEQIQKYTDCLQFYVNSTLKELRRLFLVQDLVDSLKFAVLMWLLTYVGALFNGLTLLLMAVVSMFTLPVVYVKHQAQIDQYLGLVRTHINAVVAKIQAKIPGAKRHAE.

4 disordered regions span residues 1–103 (MAAP…GEGS), 136–168 (ISESPEELGTPGSSLPDVPGIESRGLFSSDSGI), 204–244 (EVKH…EPAP), and 285–580 (LTEI…APPP). Residues 204 to 240 (EVKHQEQNHPELEDKDLDFKNKDTDISIKPEGVREPD) show a composition bias toward basic and acidic residues. A Phosphoserine modification is found at Ser327. The span at 328 to 341 (PGSITPPSSGTEPS) shows a compositional bias: low complexity. Residues Ser350, Ser352, and Ser487 each carry the phosphoserine modification. Over residues 497 to 511 (AIREETGVRAEERAP) the composition is skewed to basic and acidic residues. Positions 589-776 (AIDLLYWRDI…KIPGAKRHAE (188 aa)) constitute a Reticulon domain. 2 helical membrane-spanning segments follow: residues 603-623 (IVFGSFLLLLFSLTQFSVVSV) and 705-725 (FAVLMWLLTYVGALFNGLTLL).

In terms of assembly, interacts with NDRG1. Interacts with BACE1. Interacts with TMEM33. In terms of processing, phosphorylated.

It is found in the endoplasmic reticulum membrane. Its subcellular location is the golgi apparatus membrane. Inhibits amyloid precursor protein processing, probably by blocking BACE1 activity. This chain is Reticulon-1 (RTN1), found in Pan troglodytes (Chimpanzee).